An 812-amino-acid chain; its full sequence is 1,4-alpha-glucan branching enzyme GlgB (812 aa).

The segment covering 1–11 (MNNGDVNNGTA) has biased composition (polar residues). Positions 1-83 (MNNGDVNNGT…SALPADPPAV (83 aa)) are disordered. Low complexity predominate over residues 49 to 64 (SSASAQPGQTADDPAV). Residues 65–83 (PSAPPSAPPSALPADPPAV) show a composition bias toward pro residues. Residue D490 is the Nucleophile of the active site. Residue E543 is the Proton donor of the active site.

This sequence belongs to the glycosyl hydrolase 13 family. GlgB subfamily. As to quaternary structure, monomer.

The enzyme catalyses Transfers a segment of a (1-&gt;4)-alpha-D-glucan chain to a primary hydroxy group in a similar glucan chain.. Its pathway is glycan biosynthesis; glycogen biosynthesis. Catalyzes the formation of the alpha-1,6-glucosidic linkages in glycogen by scission of a 1,4-alpha-linked oligosaccharide from growing alpha-1,4-glucan chains and the subsequent attachment of the oligosaccharide to the alpha-1,6 position. The chain is 1,4-alpha-glucan branching enzyme GlgB from Frankia casuarinae (strain DSM 45818 / CECT 9043 / HFP020203 / CcI3).